The primary structure comprises 477 residues: Ribulose bisphosphate carboxylase large chain (477 aa).

Residues 1 to 2 (MS) constitute a propeptide that is removed on maturation. Pro3 bears the N-acetylproline mark. Lys14 carries the post-translational modification N6,N6,N6-trimethyllysine. Substrate-binding residues include Asn123 and Thr173. Lys175 serves as the catalytic Proton acceptor. Lys177 contributes to the substrate binding site. Lys201, Asp203, and Glu204 together coordinate Mg(2+). Lys201 carries the post-translational modification N6-carboxylysine. His294 functions as the Proton acceptor in the catalytic mechanism. Residues Arg295, His327, and Ser379 each coordinate substrate.

It belongs to the RuBisCO large chain family. Type I subfamily. Heterohexadecamer of 8 large chains and 8 small chains; disulfide-linked. The disulfide link is formed within the large subunit homodimers. Requires Mg(2+) as cofactor. In terms of processing, the disulfide bond which can form in the large chain dimeric partners within the hexadecamer appears to be associated with oxidative stress and protein turnover.

It localises to the plastid. It is found in the chloroplast. The enzyme catalyses 2 (2R)-3-phosphoglycerate + 2 H(+) = D-ribulose 1,5-bisphosphate + CO2 + H2O. The catalysed reaction is D-ribulose 1,5-bisphosphate + O2 = 2-phosphoglycolate + (2R)-3-phosphoglycerate + 2 H(+). Its function is as follows. RuBisCO catalyzes two reactions: the carboxylation of D-ribulose 1,5-bisphosphate, the primary event in carbon dioxide fixation, as well as the oxidative fragmentation of the pentose substrate in the photorespiration process. Both reactions occur simultaneously and in competition at the same active site. The chain is Ribulose bisphosphate carboxylase large chain from Nicotiana sylvestris (Wood tobacco).